Reading from the N-terminus, the 368-residue chain is Homoserine O-acetyltransferase (368 aa).

In terms of domain architecture, AB hydrolase-1 spans isoleucine 43–glutamate 346. Serine 145 serves as the catalytic Nucleophile. Arginine 212 serves as a coordination point for substrate. Catalysis depends on residues aspartate 307 and histidine 340. Position 341 (aspartate 341) interacts with substrate.

It belongs to the AB hydrolase superfamily. MetX family. Homodimer.

Its subcellular location is the cytoplasm. The catalysed reaction is L-homoserine + acetyl-CoA = O-acetyl-L-homoserine + CoA. Its pathway is amino-acid biosynthesis; L-methionine biosynthesis via de novo pathway; O-acetyl-L-homoserine from L-homoserine: step 1/1. Functionally, transfers an acetyl group from acetyl-CoA to L-homoserine, forming acetyl-L-homoserine. This Listeria monocytogenes serovar 1/2a (strain ATCC BAA-679 / EGD-e) protein is Homoserine O-acetyltransferase.